Consider the following 142-residue polypeptide: Peptide methionine sulfoxide reductase MsrB (142 aa).

The MsrB domain maps to 3 to 126; that stretch reads KEELKKKLSP…NSAALRFIPF (124 aa). C115 functions as the Nucleophile in the catalytic mechanism.

The protein belongs to the MsrB Met sulfoxide reductase family.

It carries out the reaction L-methionyl-[protein] + [thioredoxin]-disulfide + H2O = L-methionyl-(R)-S-oxide-[protein] + [thioredoxin]-dithiol. The chain is Peptide methionine sulfoxide reductase MsrB from Lactococcus lactis subsp. cremoris (strain SK11).